The sequence spans 150 residues: MPVMKQLGPAQPKKRLDRGALSISAPLGDFRHTLHVGRGGDAFGDTSFLSRHGGGPPPEPGAPPVVAPHSVAPPAAPQPPVAVPSPADPLLSFHLDLGPSMLDAVLGVMDAERSETTATKPDGDAHPRVQHPKTRCCSNADLQLDDVIGL.

Disordered stretches follow at residues 1 to 20 (MPVM…DRGA), 34 to 89 (LHVG…PADP), and 114 to 133 (SETT…QHPK). In terms of domain architecture, CRIB spans 23 to 37 (ISAPLGDFRHTLHVG). The residue at position 38 (Arg-38) is an Omega-N-methylarginine. 2 stretches are compositionally biased toward pro residues: residues 55-66 (GPPPEPGAPPVV) and 74-87 (PAAP…PSPA). Over residues 114 to 127 (SETTATKPDGDAHP) the composition is skewed to basic and acidic residues.

Belongs to the BORG/CEP family. As to quaternary structure, interacts with CDC42 in a GTP-dependent manner, and with SEPT7. In terms of tissue distribution, highly expressed in the skeletal muscle.

Its subcellular location is the endomembrane system. It localises to the cytoplasm. The protein resides in the cytoskeleton. In terms of biological role, probably involved in the organization of the actin cytoskeleton. May act downstream of CDC42 to induce actin filament assembly leading to cell shape changes. Induces pseudopodia formation in fibroblasts. Inhibits MAPK8 independently of CDC42 binding. Controls septin organization and this effect is negatively regulated by CDC42. In Mus musculus (Mouse), this protein is Cdc42 effector protein 5 (Cdc42ep5).